A 1456-amino-acid polypeptide reads, in one-letter code: ABC-type transporter eriD (1456 aa).

Residues 1-65 (MAENEKVTYG…DPRMDPLSGK (65 aa)) are disordered. The span at 30–40 (SMTNASRSSVY) shows a compositional bias: polar residues. An ABC transporter 1 domain is found at 118–372 (LDIPGLARDI…FIDMGFECPP (255 aa)). The next 6 helical transmembrane spans lie at 481-501 (NFLT…SIFY), 515-535 (ALLF…ILQI), 561-581 (VLCD…VLYF), 590-610 (GAFF…SMIF), 623-643 (AMAP…FTIP), and 734-754 (ILFG…EFIA). Residues 775 to 799 (EGASEDEEAGTGSTGTRTQEEPVDK) are disordered. The ABC transporter 2 domain maps to 813-1056 (FHWEDVIYDI…IIDYFEGQGA (244 aa)). 849-856 (GASGAGKT) is a binding site for ATP. A run of 7 helical transmembrane segments spans residues 1148 to 1168 (YIYS…FSFF), 1184 to 1204 (VFMG…HFVT), 1233 to 1253 (LPWN…PVGM), 1269 to 1289 (LMFL…HMLI), 1301 to 1321 (IASL…GPSG), 1337 to 1357 (PFTY…PAFC), and 1423 to 1443 (FGFL…FYWL).

Belongs to the ABC transporter superfamily. ABCG family. PDR (TC 3.A.1.205) subfamily.

The protein localises to the membrane. Functionally, ABC-type transporter; part of the gene cluster that mediates the biosynthesis of erinacines, cyathane-xylosides that show unique biological activities, including leishmanicidal activity, stimulating activity for nerve growth-factor synthesis, and agonistic activity toward the kappa opioid receptor. This chain is ABC-type transporter eriD, found in Hericium erinaceus (Lion's mane mushroom).